A 127-amino-acid chain; its full sequence is ALK and LTK ligand 1 (127 aa).

An N-terminal signal peptide occupies residues 1 to 27 (MWLTKPSTPVSALLLLALALSPPGTQG). Cystine bridges form between Cys-88–Cys-124 and Cys-102–Cys-111.

It belongs to the ALKAL family.

Its subcellular location is the secreted. The protein localises to the cell membrane. Functionally, cytokine that acts as a physiological ligand for receptor tyrosine kinase LTK, leading to its activation. Monomeric ALKAL1 binds to LTK, leading to LTK homodimerization and activation. In contrast to ALKAL2, does not act as a potent physiological ligand for ALK. The protein is ALK and LTK ligand 1 of Mus musculus (Mouse).